A 167-amino-acid polypeptide reads, in one-letter code: UPF0336 protein MAP_4109 (167 aa).

The region spanning 21–124 (GREQLRQFAL…RFGADIVVTK (104 aa)) is the MaoC-like domain.

Belongs to the UPF0336 family.

The protein is UPF0336 protein MAP_4109 of Mycolicibacterium paratuberculosis (strain ATCC BAA-968 / K-10) (Mycobacterium paratuberculosis).